Consider the following 273-residue polypeptide: Dermonecrotic toxin LapSicTox-alphaIB1b2 (273 aa).

H5 is an active-site residue. Residues E25 and D27 each contribute to the Mg(2+) site. The active-site Nucleophile is the H41. Cystine bridges form between C45-C51 and C47-C190. Residue D85 participates in Mg(2+) binding. N250 carries an N-linked (GlcNAc...) asparagine glycan.

The protein belongs to the arthropod phospholipase D family. Class II subfamily. Mg(2+) serves as cofactor. In terms of tissue distribution, expressed by the venom gland.

The protein localises to the secreted. It carries out the reaction an N-(acyl)-sphingosylphosphocholine = an N-(acyl)-sphingosyl-1,3-cyclic phosphate + choline. It catalyses the reaction an N-(acyl)-sphingosylphosphoethanolamine = an N-(acyl)-sphingosyl-1,3-cyclic phosphate + ethanolamine. The catalysed reaction is a 1-acyl-sn-glycero-3-phosphocholine = a 1-acyl-sn-glycero-2,3-cyclic phosphate + choline. The enzyme catalyses a 1-acyl-sn-glycero-3-phosphoethanolamine = a 1-acyl-sn-glycero-2,3-cyclic phosphate + ethanolamine. Functionally, dermonecrotic toxins cleave the phosphodiester linkage between the phosphate and headgroup of certain phospholipids (sphingolipid and lysolipid substrates), forming an alcohol (often choline) and a cyclic phosphate. This toxin acts on sphingomyelin (SM). It may also act on ceramide phosphoethanolamine (CPE), lysophosphatidylcholine (LPC) and lysophosphatidylethanolamine (LPE), but not on lysophosphatidylserine (LPS), and lysophosphatidylglycerol (LPG). It acts by transphosphatidylation, releasing exclusively cyclic phosphate products as second products. Induces dermonecrosis, hemolysis, increased vascular permeability, edema, inflammatory response, and platelet aggregation. The protein is Dermonecrotic toxin LapSicTox-alphaIB1b2 of Loxosceles apachea (Apache recluse spider).